We begin with the raw amino-acid sequence, 923 residues long: Probable ribosylation factor GTPase-activating protein cnt6 (923 aa).

At serine 207 the chain carries Phosphoserine. Over residues 444–455 the composition is skewed to basic and acidic residues; sequence TTRRDKGREMHR. The tract at residues 444–476 is disordered; sequence TTRRDKGREMHRSQVIQTSGRPKSMAPPSPSPI. Residues 526–632 form the PH domain; the sequence is KIFKEGLLLV…WIEAICEAAK (107 aa). In terms of domain architecture, Arf-GAP spans 714 to 837; sequence NIFIQMLRKT…AFIDFAGVDA (124 aa). A C4-type zinc finger spans residues 730–754; that stretch reads CADCGSVKDVTWCSINIPVVLCIEC.

It localises to the cytoplasm. Its subcellular location is the cell tip. GTPase-activating protein for the ADP ribosylation factor family. This chain is Probable ribosylation factor GTPase-activating protein cnt6 (cnt6), found in Schizosaccharomyces pombe (strain 972 / ATCC 24843) (Fission yeast).